We begin with the raw amino-acid sequence, 398 residues long: Acetate kinase 1 (398 aa).

Asn9 is a Mg(2+) binding site. Lys16 contributes to the ATP binding site. Arg89 provides a ligand contact to substrate. Asp146 (proton donor/acceptor) is an active-site residue. Residues 206–210 (HLGNG), 281–283 (DCR), and 329–333 (GIGEN) each bind ATP. Glu384 is a Mg(2+) binding site.

The protein belongs to the acetokinase family. As to quaternary structure, homodimer. It depends on Mg(2+) as a cofactor. Requires Mn(2+) as cofactor.

It localises to the cytoplasm. It carries out the reaction acetate + ATP = acetyl phosphate + ADP. It functions in the pathway metabolic intermediate biosynthesis; acetyl-CoA biosynthesis; acetyl-CoA from acetate: step 1/2. Functionally, catalyzes the formation of acetyl phosphate from acetate and ATP. Can also catalyze the reverse reaction. The polypeptide is Acetate kinase 1 (Vibrio cholerae serotype O1 (strain ATCC 39315 / El Tor Inaba N16961)).